The primary structure comprises 817 residues: Protein-glutamine gamma-glutamyltransferase K (817 aa).

Disordered regions lie at residues 1–38 and 59–105; these read MMDGPRSDVGRWGGNPLQPPTTPSPEPEPEPDGRSRRG and DDWG…DGTI. Positions 1–100 are membrane anchorage region; that stretch reads MMDGPRSDVG…VSRGSGVNAA (100 aa). Residues 17-26 show a composition bias toward pro residues; sequence LQPPTTPSPE. Threonine 22 carries the phosphothreonine modification. Serine 24, serine 68, serine 82, serine 85, serine 92, and serine 95 each carry phosphoserine. A compositionally biased stretch (low complexity) spans 71–84; sequence RGSSSGTRRPGSRG. Catalysis depends on residues cysteine 377, histidine 436, and aspartate 459. Ca(2+)-binding residues include asparagine 499, aspartate 501, glutamate 548, and glutamate 553. Residues 793 to 817 form a disordered region; the sequence is GGFFSDAGGDSHLGETIPMASRGGA.

It belongs to the transglutaminase superfamily. Transglutaminase family. In terms of assembly, interacts with PLAAT4. Ca(2+) is required as a cofactor. Post-translationally, palmitoylated. In terms of processing, the membrane anchorage region possesses a cluster of five cysteines within which fatty acid(s) may become thioester-linked. It is subject to phorbol ester-stimulated phosphorylation and is hypersensitive to proteolysis, which releases the enzyme in a soluble form. Tyrosine-phosphorylated.

The protein localises to the membrane. The enzyme catalyses L-glutaminyl-[protein] + L-lysyl-[protein] = [protein]-L-lysyl-N(6)-5-L-glutamyl-[protein] + NH4(+). Functionally, catalyzes the cross-linking of proteins and the conjugation of polyamines to proteins. Responsible for cross-linking epidermal proteins during formation of the stratum corneum. Involved in cell proliferation. The sequence is that of Protein-glutamine gamma-glutamyltransferase K (TGM1) from Homo sapiens (Human).